A 459-amino-acid polypeptide reads, in one-letter code: UNC93-like protein 1 (459 aa).

Residues 1 to 26 (MNVRDEGKTTAEKHGGGEENKSPENK) form a disordered region. The next 11 membrane-spanning stretches (helical) occupy residues 38–58 (LMGF…GMGG), 73–93 (AVYT…NVLG), 96–116 (LTLA…LYYN), 122–142 (AFAI…WAGE), 159–179 (IALF…IPFI), 195–215 (YIAF…ILPA), 251–271 (LLIV…FNNV), 287–307 (FYWG…DFSF), 314–334 (GFTG…GGLA), 355–375 (GIEF…DAMY), and 425–445 (LIVN…LVYF).

Belongs to the unc-93 family.

The protein localises to the membrane. This is UNC93-like protein 1 from Arabidopsis thaliana (Mouse-ear cress).